The sequence spans 481 residues: MRRLLMNRNLSPLCRSVLRFIDLSVCRAMACFLDCFRARDNRSTSNLVSHSSLANSRKAQDSQNDLSALFLSEEKSASSPCLDKERFDLDSIHIDKGLRDEARFLKACGTIPETPIEIRKASQKLSPQHSGSSHFHSWISSSSSMGSRLAESSTPMKACEEVGRPSFTSEQTASSCVIDVRDNARISSASSDGTEVESVGTAIKGELDRTARPTFTAGKNKSVRFECDLDQSNSSNSSENGSSRKPEMGGKICFTVSSPNPTPLKLSDEMQTPGTIYPANMESGGRGRPRIRSQFVHSVSNIMENASLYKVYKDSHEGLDYEEQIEAETPSSETYGEKVEESSDEKLSKFEASFSPWLNQINENIAALNERTPGVGVITPGDRPIIGLVAAQWIENEQTEISPKMWDGNGIPNSTTKYKEDQKVSWHATPFEVRLEKALSEEGGQSLFPQRKLEVMMEEVEGDTDISQLHHSVQPNSVVSF.

The segment at 226 to 250 is disordered; that stretch reads ECDLDQSNSSNSSENGSSRKPEMGG. The span at 232–241 shows a compositional bias: low complexity; the sequence is SNSSNSSENG.

In terms of biological role, required for normal spindle orientation at male meiosis II and normal formation of tetrad of microspores. Acts as a positive regulator of PS1 in male sporogenesis. Not involved in female meiosis. In Arabidopsis thaliana (Mouse-ear cress), this protein is Protein JASON.